The chain runs to 86 residues: MKGIAMLLVSCLLFSFLSTNLAKELKWCPSKDVFNGSCTDTGSPSYTCFLDLLGSKSASAMPKNCKCTPLPHNRRQCDCFVVCDSN.

Residues 1–22 (MKGIAMLLVSCLLFSFLSTNLA) form the signal peptide. 4 disulfides stabilise this stretch: cysteine 28–cysteine 83, cysteine 38–cysteine 67, cysteine 48–cysteine 77, and cysteine 65–cysteine 79.

It belongs to the DEFL family.

It localises to the secreted. In Arabidopsis thaliana (Mouse-ear cress), this protein is Putative defensin-like protein 244 (SCRL11).